We begin with the raw amino-acid sequence, 508 residues long: Steroid 17-alpha-hydroxylase/17,20 lyase (508 aa).

N202 lines the substrate pocket. Heme is bound at residue C442.

Belongs to the cytochrome P450 family. Requires heme as cofactor.

It is found in the endoplasmic reticulum membrane. The protein resides in the microsome membrane. It catalyses the reaction a C21-steroid + reduced [NADPH--hemoprotein reductase] + O2 = a 17alpha-hydroxy-C21-steroid + oxidized [NADPH--hemoprotein reductase] + H2O + H(+). The enzyme catalyses progesterone + reduced [NADPH--hemoprotein reductase] + O2 = 17alpha-hydroxyprogesterone + oxidized [NADPH--hemoprotein reductase] + H2O + H(+). It carries out the reaction pregnenolone + reduced [NADPH--hemoprotein reductase] + O2 = 17alpha-hydroxypregnenolone + oxidized [NADPH--hemoprotein reductase] + H2O + H(+). The catalysed reaction is 17alpha-hydroxyprogesterone + reduced [NADPH--hemoprotein reductase] + O2 = androst-4-ene-3,17-dione + acetate + oxidized [NADPH--hemoprotein reductase] + H2O + 2 H(+). It catalyses the reaction 17alpha-hydroxyprogesterone + reduced [NADPH--hemoprotein reductase] + O2 = 16alpha,17alpha-dihydroxyprogesterone + oxidized [NADPH--hemoprotein reductase] + H2O + H(+). The enzyme catalyses 16alpha,17alpha-dihydroxyprogesterone + reduced [NADPH--hemoprotein reductase] + O2 = 6beta,16alpha,17alpha-trihydroxyprogesterone + oxidized [NADPH--hemoprotein reductase] + H2O + H(+). It carries out the reaction 17alpha-hydroxypregnenolone + reduced [NADPH--hemoprotein reductase] + O2 = 3beta-hydroxyandrost-5-en-17-one + acetate + oxidized [NADPH--hemoprotein reductase] + H2O + 2 H(+). The catalysed reaction is 16alpha,17alpha-dihydroxypregnenolone + reduced [NADPH--hemoprotein reductase] + O2 = 3beta,16alpha-dihydroxy-androst-5-en-17-one + acetate + oxidized [NADPH--hemoprotein reductase] + H2O + 2 H(+). It catalyses the reaction 3beta-hydroxyandrost-5-en-17-one + reduced [NADPH--hemoprotein reductase] + O2 = 3beta,16alpha-dihydroxy-androst-5-en-17-one + oxidized [NADPH--hemoprotein reductase] + H2O + H(+). The enzyme catalyses androst-4-ene-3,17-dione + reduced [NADPH--hemoprotein reductase] + O2 = 16alpha-hydroxyandrost-4-ene-3,17-dione + oxidized [NADPH--hemoprotein reductase] + H2O + H(+). It functions in the pathway steroid hormone biosynthesis. Its pathway is steroid biosynthesis; glucocorticoid biosynthesis. With respect to regulation, regulated predominantly by intracellular cAMP levels. The 17,20-lyase activity is stimulated by cytochrome b5, which acts as an allosteric effector increasing the Vmax of the lyase activity. Functionally, a cytochrome P450 monooxygenase involved in corticoid and androgen biosynthesis. Catalyzes 17-alpha hydroxylation of C21 steroids, which is common for both pathways. A second oxidative step, required only for androgen synthesis, involves an acyl-carbon cleavage. The 17-alpha hydroxy intermediates, as part of adrenal glucocorticoids biosynthesis pathway, are precursors of cortisol. Hydroxylates steroid hormones, pregnenolone and progesterone to form 17-alpha hydroxy metabolites, followed by the cleavage of the C17-C20 bond to form C19 steroids, dehydroepiandrosterone (DHEA) and androstenedione. Has 16-alpha hydroxylase activity. Catalyzes 16-alpha hydroxylation of 17-alpha hydroxy pregnenolone, followed by the cleavage of the C17-C20 bond to form 16-alpha-hydroxy DHEA. Also 16-alpha hydroxylates androgens, relevant for estriol synthesis. Mechanistically, uses molecular oxygen inserting one oxygen atom into a substrate, and reducing the second into a water molecule, with two electrons provided by NADPH via cytochrome P450 reductase (CPR; NADPH-ferrihemoprotein reductase). In Felis catus (Cat), this protein is Steroid 17-alpha-hydroxylase/17,20 lyase (CYP17A1).